Consider the following 239-residue polypeptide: Proteasome activator complex subunit 2 (239 aa).

An N-acetylalanine modification is found at A2. A Phosphoserine modification is found at S10. The tract at residues 65–86 (DIPIPDPPPKDDEMETDKQEKK) is disordered. Over residues 72 to 86 (PPKDDEMETDKQEKK) the composition is skewed to basic and acidic residues.

This sequence belongs to the PA28 family. In terms of assembly, heterodimer of PSME1 and PSME2, which forms a hexameric ring.

In terms of biological role, implicated in immunoproteasome assembly and required for efficient antigen processing. The PA28 activator complex enhances the generation of class I binding peptides by altering the cleavage pattern of the proteasome. The protein is Proteasome activator complex subunit 2 (PSME2) of Sus scrofa (Pig).